We begin with the raw amino-acid sequence, 254 residues long: Type III pantothenate kinase (254 aa).

6-13 contacts ATP; sequence DVGNTNTT. Substrate is bound by residues Y100 and 107–110; that span reads GADR. The active-site Proton acceptor is D109. A K(+)-binding site is contributed by D129. T132 is a binding site for ATP. A substrate-binding site is contributed by T184.

This sequence belongs to the type III pantothenate kinase family. Homodimer. NH4(+) is required as a cofactor. K(+) serves as cofactor.

It localises to the cytoplasm. The catalysed reaction is (R)-pantothenate + ATP = (R)-4'-phosphopantothenate + ADP + H(+). It functions in the pathway cofactor biosynthesis; coenzyme A biosynthesis; CoA from (R)-pantothenate: step 1/5. Catalyzes the phosphorylation of pantothenate (Pan), the first step in CoA biosynthesis. This chain is Type III pantothenate kinase, found in Anaeromyxobacter dehalogenans (strain 2CP-C).